Consider the following 258-residue polypeptide: Type III pantothenate kinase (258 aa).

6-13 (DVGNTNIV) lines the ATP pocket. Residues Tyr-100 and 107 to 110 (GADR) contribute to the substrate site. Asp-109 functions as the Proton acceptor in the catalytic mechanism. Residue Asp-129 coordinates K(+). Residue Thr-132 coordinates ATP. Residue Thr-184 participates in substrate binding.

The protein belongs to the type III pantothenate kinase family. Homodimer. NH4(+) is required as a cofactor. K(+) serves as cofactor.

The protein localises to the cytoplasm. It carries out the reaction (R)-pantothenate + ATP = (R)-4'-phosphopantothenate + ADP + H(+). The protein operates within cofactor biosynthesis; coenzyme A biosynthesis; CoA from (R)-pantothenate: step 1/5. Catalyzes the phosphorylation of pantothenate (Pan), the first step in CoA biosynthesis. The polypeptide is Type III pantothenate kinase (Desulfitobacterium hafniense (strain DSM 10664 / DCB-2)).